Reading from the N-terminus, the 465-residue chain is Azaphilone cluster-specific transcription factor azaR (465 aa).

Over residues 1-16 (MSDSRTTTTKNNTTNH) the composition is skewed to low complexity. The segment at 1 to 25 (MSDSRTTTTKNNTTNHKTSRQGPGS) is disordered. Positions 27–53 (CEECRRRKLRCDRQPQCQNCVDAGVYC) form a DNA-binding region, zn(2)-C6 fungal-type.

The protein resides in the nucleus. Functionally, transcription factor that regulates the expression of the gene cluster that mediates the biosynthesis of azaphilones, a class of fungal metabolites characterized by a highly oxygenated pyrano-quinone bicyclic core and exhibiting a broad range of bioactivities. This Aspergillus niger (strain ATCC 1015 / CBS 113.46 / FGSC A1144 / LSHB Ac4 / NCTC 3858a / NRRL 328 / USDA 3528.7) protein is Azaphilone cluster-specific transcription factor azaR.